Reading from the N-terminus, the 516-residue chain is Chromosomal replication initiator protein DnaA (516 aa).

The domain I, interacts with DnaA modulators stretch occupies residues 1–72; it reads MSLEHWNLCL…LLSEFAGDDL (72 aa). A domain II region spans residues 72-179; sequence LAPALKLAVK…QVEGGINHGA (108 aa). Residues 180–396 are domain III, AAA+ region; sequence NLNNSFTFDN…GALKRVIANS (217 aa). ATP contacts are provided by Gly224, Gly226, Lys227, and Thr228. Residues 397 to 516 are domain IV, binds dsDNA; the sequence is HFTGRAITPD…YKQLMRILTT (120 aa).

This sequence belongs to the DnaA family. Oligomerizes as a right-handed, spiral filament on DNA at oriC.

The protein resides in the cytoplasm. Functionally, plays an essential role in the initiation and regulation of chromosomal replication. ATP-DnaA binds to the origin of replication (oriC) to initiate formation of the DNA replication initiation complex once per cell cycle. Binds the DnaA box (a 9 base pair repeat at the origin) and separates the double-stranded (ds)DNA. Forms a right-handed helical filament on oriC DNA; dsDNA binds to the exterior of the filament while single-stranded (ss)DNA is stabiized in the filament's interior. The ATP-DnaA-oriC complex binds and stabilizes one strand of the AT-rich DNA unwinding element (DUE), permitting loading of DNA polymerase. After initiation quickly degrades to an ADP-DnaA complex that is not apt for DNA replication. Binds acidic phospholipids. In Marinomonas sp. (strain MWYL1), this protein is Chromosomal replication initiator protein DnaA.